A 115-amino-acid chain; its full sequence is MTETTPEGIVNPPIDQLLEHVDSKYRLVLFAAKRARQINAYYSQLAEGLLENVGPLVETTNQEKPLSIAMREIQAGVVEAHEMDAEEIAAQAAAAQEAPAIELDDPFADLADPNA.

This sequence belongs to the RNA polymerase subunit omega family. In terms of assembly, the RNAP catalytic core consists of 2 alpha, 1 beta, 1 beta' and 1 omega subunit. When a sigma factor is associated with the core the holoenzyme is formed, which can initiate transcription.

It catalyses the reaction RNA(n) + a ribonucleoside 5'-triphosphate = RNA(n+1) + diphosphate. Functionally, promotes RNA polymerase assembly. Latches the N- and C-terminal regions of the beta' subunit thereby facilitating its interaction with the beta and alpha subunits. The polypeptide is DNA-directed RNA polymerase subunit omega (Cutibacterium acnes (strain DSM 16379 / KPA171202) (Propionibacterium acnes)).